The chain runs to 518 residues: Zinc finger protein 776 (518 aa).

In terms of domain architecture, KRAB spans 14–89; that stretch reads VTFEDVAVNF…HWTGVCTKKV (76 aa). Residues lysine 171, lysine 196, lysine 220, and lysine 247 each participate in a glycyl lysine isopeptide (Lys-Gly) (interchain with G-Cter in SUMO2) cross-link. A C2H2-type 1; degenerate zinc finger spans residues 208–230; that stretch reads YICGESTIPFSNKHSLVLHQRLL. Residues 236-258 form a C2H2-type 2; degenerate zinc finger; sequence YVCSDSGKFTSKSNSFNNHQGVR. 7 C2H2-type zinc fingers span residues 264–286, 292–314, 320–342, 348–370, 376–398, 404–426, and 432–454; these read YQCG…QRVH, YECG…QRVH, YECD…QRVH, FECT…QRVH, YECK…QRVH, and YECR…QQIH. A C2H2-type 10; degenerate zinc finger spans residues 460–482; that stretch reads HECGECGKCFHQKGSLIRHQQIH. A C2H2-type 11 zinc finger spans residues 488 to 510; sequence HECGECGKCFRQKGNLIKHQRVH.

This sequence belongs to the krueppel C2H2-type zinc-finger protein family.

Its subcellular location is the nucleus. In terms of biological role, may be involved in transcriptional regulation. The sequence is that of Zinc finger protein 776 (ZNF776) from Homo sapiens (Human).